The following is a 621-amino-acid chain: Chaperone protein HscA homolog (621 aa).

This sequence belongs to the heat shock protein 70 family.

In terms of biological role, chaperone involved in the maturation of iron-sulfur cluster-containing proteins. Has a low intrinsic ATPase activity which is markedly stimulated by HscB. The chain is Chaperone protein HscA homolog from Polynucleobacter necessarius subsp. necessarius (strain STIR1).